We begin with the raw amino-acid sequence, 446 residues long: Tektin-4 (446 aa).

Coiled-coil stretches lie at residues 182 to 215, 297 to 346, and 378 to 422; these read IRNV…MDYS, DAIA…NDKS, and SEVG…ANSI.

The protein belongs to the tektin family.

It localises to the cytoplasm. Its subcellular location is the cytoskeleton. The protein resides in the cilium axoneme. The protein localises to the cell projection. It is found in the cilium. It localises to the flagellum. Functionally, microtubule inner protein (MIP) part of the dynein-decorated doublet microtubules (DMTs) in cilia and flagellar axoneme. Forms filamentous polymers in the walls of ciliary and flagellar microtubules. Contributes to normal sperm motility. This chain is Tektin-4 (tekt4), found in Xenopus laevis (African clawed frog).